We begin with the raw amino-acid sequence, 288 residues long: Beta-lactamase CARB-4 (288 aa).

A signal peptide spans 1 to 17 (MKLLLVFSLLIPSMVFA). Serine 65 serves as the catalytic Acyl-ester intermediate. A disulfide bridge connects residues cysteine 72 and cysteine 118. 229–231 (RSG) contributes to the substrate binding site.

The protein belongs to the class-A beta-lactamase family.

It catalyses the reaction a beta-lactam + H2O = a substituted beta-amino acid. With respect to regulation, inhibited by clavulanic acid and sulbactam. In terms of biological role, hydrolyzes carbenicillin. Methicillin and oxacillin are weakly hydrolyzed. The chain is Beta-lactamase CARB-4 (carB4) from Pseudomonas aeruginosa.